The chain runs to 954 residues: Kinesin-like protein KIN-7A (954 aa).

A disordered region spans residues 1–29 (MGVSRPPSTPASKIERTPMSTPTPGGSTR). Over residues 17–28 (TPMSTPTPGGST) the composition is skewed to low complexity. The region spanning 34–354 (KIFVTVRVRP…LFFATCAKEV (321 aa)) is the Kinesin motor domain. 119-126 (GQTSSGKT) serves as a coordination point for ATP. Coiled-coil stretches lie at residues 363-436 (VVSD…GDNQ) and 480-588 (LKHE…LVMS). Disordered stretches follow at residues 624–689 (PNLI…SSVN) and 741–762 (GKTNDMEEDSEENAGSLQDGPD). Residues 630 to 639 (PCSPLSSSRP) show a composition bias toward low complexity. 2 stretches are compositionally biased toward basic and acidic residues: residues 640–660 (LEPEVENRAPEGDTVSHEGSE) and 666–681 (KSEDTGDVSSRDETPR).

Belongs to the TRAFAC class myosin-kinesin ATPase superfamily. Kinesin family. KIN-7 subfamily. Ubiquitous with a preferential expression in the shoot apical meristem (SAM).

In terms of biological role, may be essential to promote the progression of cytokinesis during node-internode differentiation. The protein is Kinesin-like protein KIN-7A of Oryza sativa subsp. japonica (Rice).